A 235-amino-acid polypeptide reads, in one-letter code: Aspartate/glutamate leucyltransferase (235 aa).

Belongs to the R-transferase family. Bpt subfamily.

It localises to the cytoplasm. It carries out the reaction N-terminal L-glutamyl-[protein] + L-leucyl-tRNA(Leu) = N-terminal L-leucyl-L-glutamyl-[protein] + tRNA(Leu) + H(+). It catalyses the reaction N-terminal L-aspartyl-[protein] + L-leucyl-tRNA(Leu) = N-terminal L-leucyl-L-aspartyl-[protein] + tRNA(Leu) + H(+). Functionally, functions in the N-end rule pathway of protein degradation where it conjugates Leu from its aminoacyl-tRNA to the N-termini of proteins containing an N-terminal aspartate or glutamate. This chain is Aspartate/glutamate leucyltransferase, found in Pseudomonas putida (strain ATCC 700007 / DSM 6899 / JCM 31910 / BCRC 17059 / LMG 24140 / F1).